The chain runs to 975 residues: Exocyst complex component 4 (975 aa).

A2 is subject to N-acetylalanine. The residue at position 9 (K9) is an N6-acetyllysine. Phosphoserine is present on S32. Residues 32-114 (STSDDVEDRE…HCKRDELRKL (83 aa)) are a coiled coil. A compositionally biased stretch (basic and acidic residues) spans 211–224 (RNKEKGKMSSHGKD). A disordered region spans residues 211–230 (RNKEKGKMSSHGKDPSPGPL). S226 bears the Phosphoserine mark. At T238 the chain carries Phosphothreonine. S469 carries the post-translational modification Phosphoserine.

Belongs to the SEC8 family. As to quaternary structure, the exocyst complex is composed of EXOC1, EXOC2, EXOC3, EXOC4, EXOC5, EXOC6, EXOC7 and EXOC8. Interacts with BIRC6/bruce. Interacts with MYRIP. Interacts with SH3BP1; required for the localization of both SH3BP1 and the exocyst to the leading edge of migrating cells. Interacts with SLC6A9. As to expression, expressed in the striatum (at protein level).

The protein resides in the midbody. It is found in the midbody ring. It localises to the cell projection. Its subcellular location is the cytoplasm. The protein localises to the cytoskeleton. The protein resides in the microtubule organizing center. It is found in the centrosome. Functionally, component of the exocyst complex involved in the docking of exocytic vesicles with fusion sites on the plasma membrane. This Mus musculus (Mouse) protein is Exocyst complex component 4 (Exoc4).